A 218-amino-acid polypeptide reads, in one-letter code: Tubulin polymerization-promoting protein (218 aa).

The segment at 1 to 46 (MADSKAKPAKAANKTPPKSPGDPARAAKRLSLESEGANEGATAAPE) is disordered. Positions 1 to 115 (MADSKAKPAK…SCRTITFEQF (115 aa)) are mediates interaction with LIMK1. Thr15 is modified (phosphothreonine). Residues Ser19, Ser31, and Ser34 each carry the phosphoserine modification. Thr42 carries the phosphothreonine modification. Positions 60, 71, 79, and 82 each coordinate Zn(2+). Thr91 bears the Phosphothreonine mark. Residue Ser106 is modified to Phosphoserine. Ser151 carries an O-linked (GlcNAc) serine glycan. Residues Ser158 and Ser159 each carry the phosphoserine modification. Residues 166–192 (TDTSKFTGSHKERFDQSGKGKGKAGRV) are disordered. Residues 174 to 183 (SHKERFDQSG) are compositionally biased toward basic and acidic residues.

This sequence belongs to the TPPP family. As to quaternary structure, homodimer. Binds tubulin; binding is inhibited by GTP. Interacts with MAPK1. Interacts with GAPDH; the interaction is direct. Interacts with LIMK1 (via the PDZ domain); the interaction is direct. Interacts with LIMK2. Interacts with HDAC6; thereby inhibiting the tubulin deacetylase activity of HDAC6. Interacts with aggregated SNCA; may have a pro-aggregatory role in synucleinopathies. Interacts with DYNLL1. Interacts (via C-terminus) with S100A2, S100A6 and S100B; these interactions inhibit TPPP dimerization. The cofactor is Mg(2+). In terms of processing, phosphorylated by LIMK1 on serine residues; phosphorylation may alter the tubulin polymerization activity. Phosphorylation by LIMK2, but not LIMK1, regulates astral microtubule organization at early stage of mitosis. Phosphorylation by ROCK1 at Ser-31, Ser-106 and Ser-158 inhibits interaction with HDAC6, resulting in decreased acetylation of tubulin, increased cell motility and entry into S-phase. Phosphorylation by CDK1 inhibits the microtubule polymerizing activity. Post-translationally, degraded by the proteasome; zinc-binding inhibits degradation by the proteasome. In terms of tissue distribution, widely expressed with higher expression in brain (at protein level).

It localises to the golgi outpost. It is found in the cytoplasm. The protein localises to the cytoskeleton. The protein resides in the microtubule organizing center. Its subcellular location is the nucleus. It localises to the spindle. The enzyme catalyses GTP + H2O = GDP + phosphate + H(+). Its function is as follows. Regulator of microtubule dynamics that plays a key role in myelination by promoting elongation of the myelin sheath. Acts as a microtubule nucleation factor in oligodendrocytes: specifically localizes to the postsynaptic Golgi apparatus region, also named Golgi outpost, and promotes microtubule nucleation, an important step for elongation of the myelin sheath. Required for both uniform polarized growth of distal microtubules as well as directing the branching of proximal processes. Shows magnesium-dependent GTPase activity; the role of the GTPase activity is unclear. In addition to microtubule nucleation activity, also involved in microtubule bundling and stabilization of existing microtubules, thereby maintaining the integrity of the microtubule network. Regulates microtubule dynamics by promoting tubulin acetylation: acts by inhibiting the tubulin deacetylase activity of HDAC6. Also regulates cell migration: phosphorylation by ROCK1 inhibits interaction with HDAC6, resulting in decreased acetylation of tubulin and increased cell motility. Plays a role in cell proliferation by regulating the G1/S-phase transition. Involved in astral microtubule organization and mitotic spindle orientation during early stage of mitosis; this process is regulated by phosphorylation by LIMK2. This chain is Tubulin polymerization-promoting protein, found in Mus musculus (Mouse).